A 339-amino-acid polypeptide reads, in one-letter code: Oncoprotein MEQ (339 aa).

The disordered stretch occupies residues 1 to 80 (MSQEPEPGAM…ARRRRRKQTD (80 aa)). Position 42 is a phosphoserine; by host CDK2 (Ser42). The interval 57 to 84 (KQKLERRRKRNRDAARRRRRKQTDYVDK) is basic motif. The 64-residue stretch at 57–120 (KQKLERRRKR…TSLRVQLACH (64 aa)) folds into the bZIP domain. Over residues 60-77 (LERRRKRNRDAARRRRRK) the composition is skewed to basic residues. The Nuclear localization signal motif lies at 62–78 (RRRKRNRDAARRRRRKQ). Residues 85 to 113 (LHEACEELQRANEHLRKEIRDLRTECTSL) form a leucine-zipper region. The tract at residues 120–339 (HEPVCPMAVP…VWWFPGDGRP (220 aa)) is transactivation domain. A compositionally biased stretch (pro residues) spans 145 to 160 (PEPPICTPPPPSPDEP). The segment at 145–172 (PEPPICTPPPPSPDEPNAPHCSGSQPPI) is disordered.

Belongs to the bZIP family. Jun subfamily. In terms of assembly, homodimer. Interacts with host JUN; this interaction allows MEQ to engage in host cell processes by disguising itself as a cellular JUN. In terms of processing, phosphorylated by host CDK2; this phosphorylation greatly reduces the DNA binding activity of MEQ.

The protein localises to the host nucleus. It localises to the host nucleolus. Its function is as follows. Functions as a DNA-binding transcription factor. Promotes transformation, host cell growth, host cell-cycle progression through G1/S phase, and possesses antiapoptotic activity. Forms functional heterodimers with host JUN. These heterodimers bind with high affinity DNA sequences called MEQ-responsive elements MERE I (TGACA/GTCA), while MEQ homodimers bind a second type of sites termed MERE II (ACACA). Both homo and heterodimerization of MEQ are required for oncogenesis. This Gallid herpesvirus 2 (strain Chicken/Md5/ATCC VR-987) (GaHV-2) protein is Oncoprotein MEQ (MDV005).